Reading from the N-terminus, the 252-residue chain is MNSMKRYIFGNWKTYKTTQEVKEFFSVLNQTKLTKNPDVVFGVAPVFVHLGLANQLERNECLVLAQDANYVMNKANTGTVSYEQLKDIGVNYVIIGHSERRKLFHESDELINQKVKTLLENKMRPILCIGETLEEYEANKTKAVLKDQLEKDLKGIDSSLLKDLIIAYEPVWAIGTGKTASSQTAQDAIAYIRTVLGLLSSKTIANELPILYGGSVTPDNVSELLAQKDINGALVGGASLDPHKFIQLIEAK.

Position 11–13 (11–13 (NWK)) interacts with substrate. His97 (electrophile) is an active-site residue. Glu169 serves as the catalytic Proton acceptor. Substrate-binding positions include Gly175, Ser215, and 236-237 (GG).

The protein belongs to the triosephosphate isomerase family. In terms of assembly, homodimer.

The protein resides in the cytoplasm. The catalysed reaction is D-glyceraldehyde 3-phosphate = dihydroxyacetone phosphate. It participates in carbohydrate biosynthesis; gluconeogenesis. The protein operates within carbohydrate degradation; glycolysis; D-glyceraldehyde 3-phosphate from glycerone phosphate: step 1/1. In terms of biological role, involved in the gluconeogenesis. Catalyzes stereospecifically the conversion of dihydroxyacetone phosphate (DHAP) to D-glyceraldehyde-3-phosphate (G3P). This Mycoplasmoides gallisepticum (strain R(low / passage 15 / clone 2)) (Mycoplasma gallisepticum) protein is Triosephosphate isomerase.